The primary structure comprises 96 residues: DNA-directed RNA polymerase subunit Rpo11 (96 aa).

Belongs to the archaeal Rpo11/eukaryotic RPB11/RPC19 RNA polymerase subunit family. As to quaternary structure, part of the RNA polymerase complex.

The protein resides in the cytoplasm. The catalysed reaction is RNA(n) + a ribonucleoside 5'-triphosphate = RNA(n+1) + diphosphate. In terms of biological role, DNA-dependent RNA polymerase (RNAP) catalyzes the transcription of DNA into RNA using the four ribonucleoside triphosphates as substrates. This Haloquadratum walsbyi (strain DSM 16790 / HBSQ001) protein is DNA-directed RNA polymerase subunit Rpo11.